A 170-amino-acid chain; its full sequence is Large ribosomal subunit protein uL10 (170 aa).

Belongs to the universal ribosomal protein uL10 family. Part of the ribosomal stalk of the 50S ribosomal subunit. The N-terminus interacts with L11 and the large rRNA to form the base of the stalk. The C-terminus forms an elongated spine to which L12 dimers bind in a sequential fashion forming a multimeric L10(L12)X complex.

Forms part of the ribosomal stalk, playing a central role in the interaction of the ribosome with GTP-bound translation factors. This is Large ribosomal subunit protein uL10 from Nitratiruptor sp. (strain SB155-2).